A 98-amino-acid polypeptide reads, in one-letter code: Putative defensin-like protein 239 (98 aa).

The signal sequence occupies residues 1-23; it reads MRYTTSFIGLCFLIFLLKNLVNG. 4 cysteine pairs are disulfide-bonded: C29–C89, C39–C69, C47–C86, and C67–C88.

Belongs to the DEFL family.

It localises to the secreted. The chain is Putative defensin-like protein 239 (SCRL17) from Arabidopsis thaliana (Mouse-ear cress).